Reading from the N-terminus, the 457-residue chain is tRNA-2-methylthio-N(6)-dimethylallyladenosine synthase (457 aa).

The region spanning 3–120 (KKVYVKTFGC…LPQMIDARRE (118 aa)) is the MTTase N-terminal domain. 6 residues coordinate [4Fe-4S] cluster: Cys12, Cys49, Cys83, Cys157, Cys161, and Cys164. Residues 143 to 377 (RVEGPSAFVS…QATIEENVAR (235 aa)) enclose the Radical SAM core domain. In terms of domain architecture, TRAM spans 380-447 (QSMLGKVERI…PHSLRGELVL (68 aa)).

Belongs to the methylthiotransferase family. MiaB subfamily. Monomer. The cofactor is [4Fe-4S] cluster.

The protein resides in the cytoplasm. The catalysed reaction is N(6)-dimethylallyladenosine(37) in tRNA + (sulfur carrier)-SH + AH2 + 2 S-adenosyl-L-methionine = 2-methylsulfanyl-N(6)-dimethylallyladenosine(37) in tRNA + (sulfur carrier)-H + 5'-deoxyadenosine + L-methionine + A + S-adenosyl-L-homocysteine + 2 H(+). Functionally, catalyzes the methylthiolation of N6-(dimethylallyl)adenosine (i(6)A), leading to the formation of 2-methylthio-N6-(dimethylallyl)adenosine (ms(2)i(6)A) at position 37 in tRNAs that read codons beginning with uridine. This chain is tRNA-2-methylthio-N(6)-dimethylallyladenosine synthase, found in Burkholderia mallei (strain NCTC 10247).